The following is a 523-amino-acid chain: uncharacterized protein (523 aa).

Polar residues predominate over residues 1-14 (MAVSKNIKSNVSTH). 3 disordered regions span residues 1 to 36 (MAVS…VKKA), 51 to 187 (HSSE…VVSS), and 200 to 224 (QKQE…EMEK). The span at 87 to 97 (DNRGTRLKGDI) shows a compositional bias: basic and acidic residues. Composition is skewed to acidic residues over residues 117 to 130 (DMEE…DNEY) and 138 to 182 (QDDD…DDEN). The span at 200-210 (QKQEKEEEKQP) shows a compositional bias: basic and acidic residues.

This sequence belongs to the AATF family.

This is an uncharacterized protein from Dictyostelium discoideum (Social amoeba).